We begin with the raw amino-acid sequence, 293 residues long: Acetylglutamate kinase (293 aa).

Substrate is bound by residues 68-69, Arg90, and Asn189; that span reads GG.

The protein belongs to the acetylglutamate kinase family. ArgB subfamily.

The protein resides in the cytoplasm. The catalysed reaction is N-acetyl-L-glutamate + ATP = N-acetyl-L-glutamyl 5-phosphate + ADP. The protein operates within amino-acid biosynthesis; L-arginine biosynthesis; N(2)-acetyl-L-ornithine from L-glutamate: step 2/4. In terms of biological role, catalyzes the ATP-dependent phosphorylation of N-acetyl-L-glutamate. In Mycolicibacterium smegmatis (strain ATCC 700084 / mc(2)155) (Mycobacterium smegmatis), this protein is Acetylglutamate kinase.